A 556-amino-acid chain; its full sequence is mRNA-capping enzyme subunit beta (556 aa).

Disordered stretches follow at residues 1–28 and 56–217; these read MKPS…DNNV and LPPV…QKTS. Polar residues predominate over residues 63 to 74; that stretch reads VSTSDTGNTSHT. Positions 85 to 96 are enriched in acidic residues; sequence ESDETDTDDEPG. 2 stretches are compositionally biased toward basic and acidic residues: residues 103–131 and 139–212; these read TKFR…KDKQ and IQLD…KDIF.

It belongs to the fungal TPase family. As to quaternary structure, heterodimer. The mRNA-capping enzyme is composed of two separate chains alpha and beta, respectively a mRNA guanylyltransferase and an mRNA 5'-triphosphate monophosphatase. The cofactor is Mg(2+).

Its subcellular location is the nucleus. It catalyses the reaction a 5'-end triphospho-ribonucleoside in mRNA + H2O = a 5'-end diphospho-ribonucleoside in mRNA + phosphate + H(+). Its function is as follows. First step of mRNA capping. Converts the 5'-triphosphate end of a nascent mRNA chain into a diphosphate end. This chain is mRNA-capping enzyme subunit beta (CET1), found in Kluyveromyces lactis (strain ATCC 8585 / CBS 2359 / DSM 70799 / NBRC 1267 / NRRL Y-1140 / WM37) (Yeast).